A 442-amino-acid polypeptide reads, in one-letter code: Protein bangles and beads (442 aa).

The interval 47 to 442 (AVEPAPLKPE…SEESSESKEN (396 aa)) is disordered. Composition is skewed to basic and acidic residues over residues 55-67 (PEAE…KTIE), 114-125 (PEKKTLPEEAKP), and 133-146 (EAEK…RTEA). The segment covering 159-172 (AIEQAPEAPAANAE) has biased composition (low complexity). Basic and acidic residues-rich tracts occupy residues 177 to 194 (VVDE…KSAE) and 204 to 240 (AEKE…EPAK). Low complexity-rich tracts occupy residues 241–255 (AAEA…AATK) and 272–288 (SSPA…AAQA). A compositionally biased stretch (basic and acidic residues) spans 329–339 (EAVKEQEKEQP). Residues 357 to 376 (TAAPAGAPEPTAAVAPAAVP) are compositionally biased toward low complexity. Over residues 408-442 (EPKKSSEEKSDKSESKVDESSESKESEESSESKEN) the composition is skewed to basic and acidic residues. Ser-430, Ser-433, Ser-436, and Ser-437 each carry phosphoserine.

In terms of tissue distribution, expressed in the embryonic CNS, in sets of cells that are segmentally reiterated along the periphery of the nervous system.

Its function is as follows. May play an important role during development. This chain is Protein bangles and beads (bnb), found in Drosophila melanogaster (Fruit fly).